A 218-amino-acid chain; its full sequence is uncharacterized protein (218 aa).

Helical transmembrane passes span 27-49 (IALE…GFLA), 57-77 (GGVL…GYWV), 115-135 (VFFG…AGIV), 142-162 (FLLY…SLAY), and 180-200 (FSWF…VFHF).

It belongs to the DedA family.

It is found in the cell membrane. This is an uncharacterized protein from Synechocystis sp. (strain ATCC 27184 / PCC 6803 / Kazusa).